Reading from the N-terminus, the 303-residue chain is Polyisoprenyl-teichoic acid--peptidoglycan teichoic acid transferase TagU (303 aa).

Residues 1–6 (MSKGKK) lie on the Cytoplasmic side of the membrane. The helical; Signal-anchor for type II membrane protein transmembrane segment at 7–27 (IFAIIFGIILVLFLAVVGMGA) threads the bilayer. At 28–303 (KLYWDVSKSM…QELKNQLNTK (276 aa)) the chain is on the extracellular side.

Belongs to the LytR/CpsA/Psr (LCP) family.

The protein localises to the cell membrane. Its pathway is cell wall biogenesis. Functionally, may catalyze the final step in cell wall teichoic acid biosynthesis, the transfer of the anionic cell wall polymers (APs) from their lipid-linked precursor to the cell wall peptidoglycan (PG). The chain is Polyisoprenyl-teichoic acid--peptidoglycan teichoic acid transferase TagU from Enterococcus faecalis (strain ATCC 700802 / V583).